We begin with the raw amino-acid sequence, 186 residues long: TATA box-binding protein-like 1 (186 aa).

The protein belongs to the TBP family. As to quaternary structure, binds TFIIA and TFIIB.

Its subcellular location is the cytoplasm. The protein resides in the nucleus. Functionally, part of a specialized transcription system that mediates the transcription of most ribosomal proteins through the 5'-TCT-3' motif which is a core promoter element at these genes. Seems to also mediate the transcription of NF1. Does not bind the TATA box. This chain is TATA box-binding protein-like 1 (TBPL1), found in Bos taurus (Bovine).